We begin with the raw amino-acid sequence, 199 residues long: FMN-dependent NADH:quinone oxidoreductase (199 aa).

FMN is bound at residue 17–19 (SYS).

This sequence belongs to the azoreductase type 1 family. As to quaternary structure, homodimer. FMN is required as a cofactor.

It carries out the reaction 2 a quinone + NADH + H(+) = 2 a 1,4-benzosemiquinone + NAD(+). The catalysed reaction is N,N-dimethyl-1,4-phenylenediamine + anthranilate + 2 NAD(+) = 2-(4-dimethylaminophenyl)diazenylbenzoate + 2 NADH + 2 H(+). In terms of biological role, quinone reductase that provides resistance to thiol-specific stress caused by electrophilic quinones. Its function is as follows. Also exhibits azoreductase activity. Catalyzes the reductive cleavage of the azo bond in aromatic azo compounds to the corresponding amines. The sequence is that of FMN-dependent NADH:quinone oxidoreductase from Mycoplasmopsis synoviae (strain 53) (Mycoplasma synoviae).